The chain runs to 127 residues: PanD regulatory factor (127 aa).

The N-acetyltransferase domain occupies 1–127 (MKLTILRLEH…TAQHDGWEKR (127 aa)). CoA is bound by residues 66–68 (LRV) and 72–79 (TRRRGVGQ).

Belongs to the PanZ/PanM family. As to quaternary structure, interacts with PanD in the presence of CoA. Monomer.

Functionally, controls both the activation and catalytic activity of PanD in a coenzyme A (CoA)-dependent fashion. Binding of CoA or a derivative to PanM leads to interaction with PanD, which promotes the processing and activation of pro-PanD, and subsequent substrate-mediated inhibition of the active form of PanD. Lacks acetyltransferase activity. This Salmonella typhimurium (strain LT2 / SGSC1412 / ATCC 700720) protein is PanD regulatory factor.